Here is a 78-residue protein sequence, read N- to C-terminus: RTX-VII (78 aa).

An N-terminal signal peptide occupies residues 1 to 22; it reads MKTIVYLIVSILLLSSTVLVLA. Residues 23–40 constitute a propeptide that is removed on maturation; it reads EGNAASHELQEYPIEEQR. 4 cysteine pairs are disulfide-bonded: Cys-42-Cys-58, Cys-47-Cys-63, Cys-57-Cys-73, and Cys-65-Cys-71. Arg-76 is subject to Arginine amide.

In terms of tissue distribution, expressed by the venom gland.

The protein resides in the secreted. Agonist of rat Nav1.3/SCN3A. This toxin increases the peak current amplitude, and potently inhibits the fast inactivation of the channel (EC(50)=120 nM). The inhibition of fast inactivation is voltage-independent (depolarizing voltages ranging from 220 mV to 130 mV). The toxin might bind to the domain IV of the Nav1.3 channel, while domain II might not participate in interacting with the toxin but could determine the efficacy of RTX-VII. In vivo, when intracerebroventricularly injected into mice, the toxin causes involuntary body twitching (seizure-like symptoms). The polypeptide is RTX-VII (Macrothele raveni (Funnel-web spider)).